The following is a 61-amino-acid chain: Cecropin-D (61 aa).

The signal sequence occupies residues 1–22 (MKFSKIFVFVFAIVFATASVSA). A propeptide spans 23–24 (AP) (removed by a dipeptidylpeptidase). Glutamine 60 carries the glutamine amide modification.

The protein belongs to the cecropin family. As to expression, mainly in fat body. Lower in hemocytes. Not expressed in midguts, malpighian tubules and silk glands.

The protein localises to the secreted. Functionally, cecropins have lytic and antibacterial activity against several Gram-positive and Gram-negative bacteria. The polypeptide is Cecropin-D (CECD) (Bombyx mori (Silk moth)).